We begin with the raw amino-acid sequence, 477 residues long: tRNA-2-methylthio-N(6)-dimethylallyladenosine synthase (477 aa).

The region spanning 13-130 (GGLFIKTYGC…LPAMIEEALA (118 aa)) is the MTTase N-terminal domain. Cysteine 22, cysteine 59, cysteine 93, cysteine 178, cysteine 182, and cysteine 185 together coordinate [4Fe-4S] cluster. The 233-residue stretch at 164–396 (ESNGVSAFVS…QAMLNEQTAA (233 aa)) folds into the Radical SAM core domain. The TRAM domain maps to 399–462 (EGMVGTTQRV…ANSLKGKLVA (64 aa)).

The protein belongs to the methylthiotransferase family. MiaB subfamily. In terms of assembly, monomer. [4Fe-4S] cluster serves as cofactor.

Its subcellular location is the cytoplasm. It carries out the reaction N(6)-dimethylallyladenosine(37) in tRNA + (sulfur carrier)-SH + AH2 + 2 S-adenosyl-L-methionine = 2-methylsulfanyl-N(6)-dimethylallyladenosine(37) in tRNA + (sulfur carrier)-H + 5'-deoxyadenosine + L-methionine + A + S-adenosyl-L-homocysteine + 2 H(+). In terms of biological role, catalyzes the methylthiolation of N6-(dimethylallyl)adenosine (i(6)A), leading to the formation of 2-methylthio-N6-(dimethylallyl)adenosine (ms(2)i(6)A) at position 37 in tRNAs that read codons beginning with uridine. In Hydrogenovibrio crunogenus (strain DSM 25203 / XCL-2) (Thiomicrospira crunogena), this protein is tRNA-2-methylthio-N(6)-dimethylallyladenosine synthase.